The sequence spans 375 residues: Succinyl-diaminopimelate desuccinylase (375 aa).

His-66 lines the Zn(2+) pocket. Residue Asp-68 is part of the active site. Asp-99 serves as a coordination point for Zn(2+). Glu-130 functions as the Proton acceptor in the catalytic mechanism. Zn(2+) contacts are provided by Glu-131, Glu-159, and His-345.

The protein belongs to the peptidase M20A family. DapE subfamily. As to quaternary structure, homodimer. Zn(2+) serves as cofactor. Co(2+) is required as a cofactor.

It catalyses the reaction N-succinyl-(2S,6S)-2,6-diaminopimelate + H2O = (2S,6S)-2,6-diaminopimelate + succinate. The protein operates within amino-acid biosynthesis; L-lysine biosynthesis via DAP pathway; LL-2,6-diaminopimelate from (S)-tetrahydrodipicolinate (succinylase route): step 3/3. Its function is as follows. Catalyzes the hydrolysis of N-succinyl-L,L-diaminopimelic acid (SDAP), forming succinate and LL-2,6-diaminopimelate (DAP), an intermediate involved in the bacterial biosynthesis of lysine and meso-diaminopimelic acid, an essential component of bacterial cell walls. The protein is Succinyl-diaminopimelate desuccinylase of Xanthobacter autotrophicus (strain ATCC BAA-1158 / Py2).